A 344-amino-acid chain; its full sequence is Beta-1,4-galactosyltransferase 4 (344 aa).

Topologically, residues 1–12 (MGCNPPYLLSYR) are cytoplasmic. Residues 13 to 38 (LRLLLLFTLCLTVLGWATSNYFVGAI) form a helical; Signal-anchor for type II membrane protein membrane-spanning segment. Over 39–344 (QVIPRAKNFM…NITVDFWTAA (306 aa)) the chain is Lumenal. Cys-77 and Cys-118 are joined by a disulfide. Residues 129-133 (PHRNR), 168-170 (FNR), and 195-196 (VD) contribute to the UDP-alpha-D-galactose site. Cys-189 and Cys-208 form a disulfide bridge. Position 196 (Asp-196) interacts with Mn(2+). Asn-220 is a glycosylation site (N-linked (GlcNAc...) asparagine). The UDP-alpha-D-galactose site is built by Tyr-224 and Trp-256. Residue 258–261 (GEDD) participates in N-acetyl-D-glucosamine binding. A Mn(2+)-binding site is contributed by His-289. Residue 289 to 291 (HTR) coordinates UDP-alpha-D-galactose. Arg-301 lines the N-acetyl-D-glucosamine pocket. N-linked (GlcNAc...) asparagine glycosylation is present at Asn-335.

This sequence belongs to the glycosyltransferase 7 family. As to quaternary structure, interacts with SLC35A2/UGT1. The cofactor is Mn(2+).

Its subcellular location is the golgi apparatus membrane. It is found in the secreted. The catalysed reaction is N-acetyl-D-glucosamine + UDP-alpha-D-galactose = beta-D-galactosyl-(1-&gt;4)-N-acetyl-D-glucosamine + UDP + H(+). It carries out the reaction a beta-D-GlcNAc-(1-&gt;3)-beta-D-Gal-(1-&gt;4)-beta-D-Glc-(1&lt;-&gt;1)-Cer(d18:1(4E)) + UDP-alpha-D-galactose = a neolactoside nLc4Cer(d18:1(4E)) + UDP + H(+). The enzyme catalyses 3-O-{beta-D-galactosyl-(1-&gt;3)-[6-O-sulfo-N-acetyl-beta-D-glucosaminyl-(1-&gt;6)]-N-acetyl-alpha-D-galactosaminyl}-L-seryl-[protein] + UDP-alpha-D-galactose = 3-O-{beta-D-galactosyl-(1-&gt;3)-[beta-D-galactosyl-(1-&gt;4)-6-O-sulfo-N-acetyl-beta-D-glucosaminyl-(1-&gt;6)]-N-acetyl-alpha-D-galactosaminyl}-L-seryl-[protein] + UDP + H(+). It catalyses the reaction 3-O-{beta-D-galactosyl-(1-&gt;3)-[6-O-sulfo-N-acetyl-beta-D-glucosaminyl-(1-&gt;6)]-N-acetyl-alpha-D-galactosaminyl}-L-threonyl-[protein] + UDP-alpha-D-galactose = 3-O-{beta-D-galactosyl-(1-&gt;3)-[beta-D-galactosyl-(1-&gt;4)-6-O-sulfo-N-acetyl-beta-D-glucosaminyl-(1-&gt;6)]-N-acetyl-alpha-D-galactosaminyl}-L-threonyl-[protein] + UDP + H(+). It participates in protein modification; protein glycosylation. Its pathway is glycolipid biosynthesis. Its function is as follows. Galactose (Gal) transferase involved in the synthesis of terminal N-acetyllactosamine (LacNac) unit present on glycan chains of glycoproteins and glycosphingolipids. Catalyzes the transfer of Gal residue via a beta1-&gt;4 linkage from UDP-Gal to the non-reducing terminal N-acetyl glucosamine 6-O-sulfate (6-O-sulfoGlcNAc) in the linearly growing chain of both N- and O-linked keratan sulfate proteoglycans. Cooperates with B3GNT7 N-acetyl glucosamine transferase and CHST6 and CHST1 sulfotransferases to construct and elongate mono- and disulfated disaccharide units [-&gt;3Galbeta1-&gt;4(6-sulfoGlcNAcbeta)1-&gt;] and [-&gt;3(6-sulfoGalbeta)1-&gt;4(6-sulfoGlcNAcbeta)1-&gt;] within keratan sulfate polymer. Transfers Gal residue via a beta1-&gt;4 linkage to terminal 6-O-sulfoGlcNAc within the LacNac unit of core 2 O-glycans forming 6-sulfo-sialyl-Lewis X (sLex). May contribute to the generation of sLex epitope on mucin-type glycoproteins that serve as ligands for SELL/L-selectin, a major regulator of leukocyte migration. In the biosynthesis pathway of neolacto-series glycosphingolipids, transfers Gal residue via a beta1-&gt;4 linkage to terminal GlcNAc of a lactotriaosylceramide (Lc3Cer) acceptor to form a neolactotetraosylceramide. In Rattus norvegicus (Rat), this protein is Beta-1,4-galactosyltransferase 4 (B4galt4).